Consider the following 294-residue polypeptide: Pyridoxal 5'-phosphate synthase subunit PdxS (294 aa).

A D-ribose 5-phosphate-binding site is contributed by Asp-24. The active-site Schiff-base intermediate with D-ribose 5-phosphate is Lys-81. Gly-153 contributes to the D-ribose 5-phosphate binding site. A D-glyceraldehyde 3-phosphate-binding site is contributed by Arg-165. D-ribose 5-phosphate contacts are provided by residues Gly-214 and 235–236 (GS).

This sequence belongs to the PdxS/SNZ family. In the presence of PdxT, forms a dodecamer of heterodimers.

The catalysed reaction is aldehydo-D-ribose 5-phosphate + D-glyceraldehyde 3-phosphate + L-glutamine = pyridoxal 5'-phosphate + L-glutamate + phosphate + 3 H2O + H(+). It functions in the pathway cofactor biosynthesis; pyridoxal 5'-phosphate biosynthesis. Catalyzes the formation of pyridoxal 5'-phosphate from ribose 5-phosphate (RBP), glyceraldehyde 3-phosphate (G3P) and ammonia. The ammonia is provided by the PdxT subunit. Can also use ribulose 5-phosphate and dihydroxyacetone phosphate as substrates, resulting from enzyme-catalyzed isomerization of RBP and G3P, respectively. The protein is Pyridoxal 5'-phosphate synthase subunit PdxS of Bacillus pumilus (strain SAFR-032).